Reading from the N-terminus, the 37-residue chain is Large ribosomal subunit protein bL36 (37 aa).

This sequence belongs to the bacterial ribosomal protein bL36 family.

This Rippkaea orientalis (strain PCC 8801 / RF-1) (Cyanothece sp. (strain PCC 8801)) protein is Large ribosomal subunit protein bL36.